Reading from the N-terminus, the 350-residue chain is Hydroxymethylglutaryl-CoA synthase (350 aa).

Residues Asp-33 and Val-34 each coordinate (3S)-3-hydroxy-3-methylglutaryl-CoA. The active-site Proton donor/acceptor is the Glu-85. Residues Cys-117 and Thr-158 each contribute to the (3S)-3-hydroxy-3-methylglutaryl-CoA site. Cys-117 acts as the Acyl-thioester intermediate in catalysis. Arg-204 lines the CoA pocket. The (3S)-3-hydroxy-3-methylglutaryl-CoA site is built by Thr-206 and His-239. His-239 functions as the Proton donor/acceptor in the catalytic mechanism. Residue Lys-244 coordinates CoA. (3S)-3-hydroxy-3-methylglutaryl-CoA-binding residues include Lys-248, Asn-271, and Ser-301.

This sequence belongs to the thiolase-like superfamily. Archaeal HMG-CoA synthase family. In terms of assembly, interacts with acetoacetyl-CoA thiolase that catalyzes the precedent step in the pathway and with a DUF35 protein. The acetoacetyl-CoA thiolase/HMG-CoA synthase complex channels the intermediate via a fused CoA-binding site, which allows for efficient coupling of the endergonic thiolase reaction with the exergonic HMGCS reaction.

The catalysed reaction is acetoacetyl-CoA + acetyl-CoA + H2O = (3S)-3-hydroxy-3-methylglutaryl-CoA + CoA + H(+). It participates in metabolic intermediate biosynthesis; (R)-mevalonate biosynthesis; (R)-mevalonate from acetyl-CoA: step 2/3. Catalyzes the condensation of acetyl-CoA with acetoacetyl-CoA to form 3-hydroxy-3-methylglutaryl-CoA (HMG-CoA). Functions in the mevalonate (MVA) pathway leading to isopentenyl diphosphate (IPP), a key precursor for the biosynthesis of isoprenoid compounds that are building blocks of archaeal membrane lipids. The protein is Hydroxymethylglutaryl-CoA synthase of Methanopyrus kandleri (strain AV19 / DSM 6324 / JCM 9639 / NBRC 100938).